We begin with the raw amino-acid sequence, 1148 residues long: Protocadherin-19 (1148 aa).

The first 21 residues, 1–21 (MESLLLPVLLLLAILWTQAAA), serve as a signal peptide directing secretion. Cadherin domains follow at residues 22–129 (LINL…APSF), 130–238 (PAAQ…NPVF), 239–346 (SEST…PPVI), 350–453 (SVNS…HPHF), 454–563 (SKPY…TPVI), and 569–672 (INGT…QESM). At 22-678 (LINLKYSVEE…QESMGSVNLS (657 aa)) the chain is on the extracellular side. 4 residues coordinate Ca(2+): glutamate 31, glutamate 32, aspartate 88, and aspartate 90. A disulfide bridge connects residues cysteine 93 and cysteine 99. 15 residues coordinate Ca(2+): aspartate 121, asparagine 123, aspartate 124, asparagine 125, glutamate 140, aspartate 155, aspartate 157, glutamate 199, aspartate 212, aspartate 230, serine 231, asparagine 232, aspartate 233, asparagine 234, and glutamate 249. Asparagine 261 carries an N-linked (GlcNAc...) asparagine glycan. Positions 264, 266, 270, 305, 307, 338, 340, 341, 342, 360, 375, 377, 381, 412, and 414 each coordinate Ca(2+). N-linked (GlcNAc...) asparagine glycosylation occurs at asparagine 420. Ca(2+) is bound by residues aspartate 427, aspartate 445, glutamate 446, asparagine 447, aspartate 448, asparagine 449, glutamate 464, aspartate 479, aspartate 481, asparagine 485, asparagine 522, glutamate 524, and aspartate 537. Residue asparagine 485 is glycosylated (N-linked (GlcNAc...) asparagine). An N-linked (GlcNAc...) asparagine glycan is attached at asparagine 546. 5 residues coordinate Ca(2+): aspartate 555, valine 556, asparagine 557, aspartate 558, and asparagine 559. N-linked (GlcNAc...) asparagine glycosylation occurs at asparagine 570. Residues aspartate 594, aspartate 596, asparagine 600, and aspartate 646 each coordinate Ca(2+). Asparagine 676 carries an N-linked (GlcNAc...) asparagine glycan. The helical transmembrane segment at 679-699 (LIFIIALGSIAGILFVTMIFV) threads the bilayer. Over 700–1148 (AIKCKRDNKE…GVKRLKDIVL (449 aa)) the chain is Cytoplasmic. Disordered regions lie at residues 901 to 921 (GNSL…EHDV) and 1100 to 1148 (NVNN…DIVL). Composition is skewed to basic and acidic residues over residues 906 to 921 (DSGH…EHDV), 1109 to 1123 (SEAE…KVMH), and 1130 to 1148 (KEGR…DIVL).

Homodimer; antiparallel. As to expression, moderately expressed in all regions of the brain examined, with lowest levels found in the cerebellum. Moderate expression is also found in ovary, and low expression in all other tissues tested. Also detected in primary skin fibroblast.

Its subcellular location is the cell membrane. Functionally, calcium-dependent cell-adhesion protein. This Homo sapiens (Human) protein is Protocadherin-19 (PCDH19).